Here is a 591-residue protein sequence, read N- to C-terminus: ATPase family AAA domain-containing protein 3A (591 aa).

The segment at 1–52 (MSWLFGIKGPKGEGTGPPLPLPPAQPGAEGGGDRGAGDRPSPKDKWSNFDPT) is disordered. The residue at position 2 (serine 2) is an N-acetylserine. The required for interaction with the inner surface of the mitochondrial outer membrane stretch occupies residues 2 to 49 (SWLFGIKGPKGEGTGPPLPLPPAQPGAEGGGDRGAGDRPSPKDKWSNF). Over 2–245 (SWLFGIKGPK…FRAFVTDWDK (244 aa)) the chain is Mitochondrial intermembrane. Over residues 31–47 (GGDRGAGDRPSPKDKWS) the composition is skewed to basic and acidic residues. A coiled-coil region spans residues 55-216 (ERAAKAAREL…REQIRLKAAE (162 aa)). Residues 246–263 (VTATVAGLTLLAVGVYSA) traverse the membrane as a helical segment. Over 264-586 (KNATSVAGRY…DSQTNKPPHP (323 aa)) the chain is Mitochondrial matrix. The interval 289-304 (RISVLEALRHPIQVSR) is S100B-binding. 351–358 (GPPGTGKT) is an ATP binding site. Lysine 490 is subject to N6-acetyllysine; alternate. Lysine 490 carries the post-translational modification N6-succinyllysine; alternate. N6-acetyllysine is present on residues lysine 494 and lysine 512. Positions 572-591 (KVERPDSQTNKPPHPSLLSC) are disordered.

The protein belongs to the AAA ATPase family. As to quaternary structure, can form homooligomers. Homodimer formation at the N-terminus may be regulated by ATP and is required for the interaction with the inner surface of the mitochondrial outer membrane and correct mitochondrial homeostasis. Interacts with components of the mitochondrial ribosome and with other proteins involved in mitochondrial RNA metabolism. May also interact with protein involved in lipid metabolism, including STARD9. May interact with FAM210A. Interacts with GADD45GIP1. Interacts with S100B in a Ca(+2)- and Zn(+2)-dependent manner; this interaction probably occurs in the cytosol prior to mitochondrial targeting. S100B could assist ATAD3A cytoplasmic processing, preventing aggregation and favoring mitochondrial localization. Interacts with HSP60/HSPD1. Interacts with CLPB. Interacts with EIF2AK3/PERK; ATAD3A and EIF2S1/eIF-2-alpha occupy a common binding site within the cytoplasmic loop of EIF2AK3/PERK, leading to prevent EIF2AK3/PERK association with its substrate EIF2S1/eIF-2-alpha. As to expression, expressed in heart, spleen, kidney, liver and at smaller levels, in lung and muscle (at protein level).

Its subcellular location is the mitochondrion inner membrane. It localises to the mitochondrion matrix. It is found in the mitochondrion nucleoid. It catalyses the reaction ATP + H2O = ADP + phosphate + H(+). Essential for mitochondrial network organization, mitochondrial metabolism and cell growth at organism and cellular level. May play an important role in mitochondrial protein synthesis. May also participate in mitochondrial DNA replication. May bind to mitochondrial DNA D-loops and contribute to nucleoid stability. Required for enhanced channeling of cholesterol for hormone-dependent steroidogenesis. Involved in mitochondrial-mediated antiviral innate immunity. Required to protect mitochondria from the PERK-mediated unfolded protein response: specifically inhibits the activity of EIF2AK3/PERK at mitochondria-endoplasmic reticulum contact sites, thereby providing a safe haven for mitochondrial protein translation during endoplasmic reticulum stress. Ability to inhibit EIF2AK3/PERK is independent of its ATPase activity. Also involved in the mitochondrial DNA damage response by promoting signaling between damaged genomes and the mitochondrial membrane, leading to activation of the integrated stress response (ISR). The protein is ATPase family AAA domain-containing protein 3A (Atad3a) of Mus musculus (Mouse).